The following is a 315-amino-acid chain: Homoserine kinase (315 aa).

97-107 contacts ATP; the sequence is PPARGLGSSAT.

It belongs to the GHMP kinase family. Homoserine kinase subfamily.

It localises to the cytoplasm. It carries out the reaction L-homoserine + ATP = O-phospho-L-homoserine + ADP + H(+). The protein operates within amino-acid biosynthesis; L-threonine biosynthesis; L-threonine from L-aspartate: step 4/5. Its function is as follows. Catalyzes the ATP-dependent phosphorylation of L-homoserine to L-homoserine phosphate. The polypeptide is Homoserine kinase (Prochlorococcus marinus (strain SARG / CCMP1375 / SS120)).